A 468-amino-acid polypeptide reads, in one-letter code: ERO1-like protein alpha (468 aa).

The signal sequence occupies residues 1–23 (MGRRWGFLIGFLVAVGLLGLGHG). 8 disulfide bridges follow: C35/C48, C37/C46, C85/C391, C94/C99, C94/C131, C99/C104, C208/C241, and C394/C397. A phosphoserine mark is found at S106, S143, and S145. FAD is bound by residues R187, T189, and W200. The FAD site is built by S252 and H255. Residue N280 is glycosylated (N-linked (GlcNAc...) asparagine). Residues R287 and R300 each coordinate FAD. Residue N384 is glycosylated (N-linked (GlcNAc...) asparagine).

Belongs to the EROs family. As to quaternary structure, predominantly monomer. May function both as a monomer and a homodimer. Interacts with PDILT. Interacts with ERP44; the interaction results in retention of ERO1A in the endoplasmic reticulum. Requires FAD as cofactor. The Cys-94/Cys-99 and Cys-394/Cys-397 disulfide bonds constitute the redox-active center. The Cys-94/Cys-99 disulfide bond may accept electron from P4HB and funnel them to the active site disulfide Cys-394/Cys-397. The regulatory Cys-99/Cys-104 disulfide bond stabilizes the other regulatory bond Cys-94/Cys-131. In terms of processing, phosphorylated on Ser-145 by FAM20C in the Golgi which increases its enzymatic activity. Phosphorylation is induced by lactation. It is also induced by hypoxia and reductive stress.

Its subcellular location is the endoplasmic reticulum membrane. The protein resides in the golgi apparatus lumen. It localises to the secreted. The protein localises to the cell projection. It is found in the dendrite. Its activity is regulated as follows. Enzyme activity is tightly regulated to prevent the accumulation of reactive oxygen species in the endoplasmic reticulum. Reversibly down-regulated by the formation of disulfide bonds between the active site Cys-94 and Cys-131, and between Cys-99 and Cys-104. Glutathione may be required to regulate its activity in the endoplasmic reticulum. Functionally, oxidoreductase involved in disulfide bond formation in the endoplasmic reticulum. Efficiently reoxidizes P4HB/PDI, the enzyme catalyzing protein disulfide formation, in order to allow P4HB to sustain additional rounds of disulfide formation. Following P4HB reoxidation, passes its electrons to molecular oxygen via FAD, leading to the production of reactive oxygen species (ROS) in the cell. Required for the proper folding of immunoglobulins. Plays an important role in ER stress-induced, CHOP-dependent apoptosis by activating the inositol 1,4,5-trisphosphate receptor IP3R1. In Bos taurus (Bovine), this protein is ERO1-like protein alpha.